The sequence spans 367 residues: Methylated-thiol--coenzyme M methyltransferase (367 aa).

3 residues coordinate Zn(2+): His-236, Cys-238, and Cys-313.

This sequence belongs to the uroporphyrinogen decarboxylase family. As to quaternary structure, homodimer. It depends on Zn(2+) as a cofactor.

It catalyses the reaction methanethiol + coenzyme M = methyl-coenzyme M + hydrogen sulfide + H(+). Methyltransferase involved in methanogenesis from methylated-thiols. Catalyzes two successive steps: mediates the transfer of a methyl group from the substrate to the cobalt cofactor of a methylated-thiol-specific corrinoid protein (MtsB), and the subsequent transfer of the methyl group from the corrinoid protein to coenzyme M. The sequence is that of Methylated-thiol--coenzyme M methyltransferase (mtsA) from Methanosarcina mazei (strain ATCC BAA-159 / DSM 3647 / Goe1 / Go1 / JCM 11833 / OCM 88) (Methanosarcina frisia).